We begin with the raw amino-acid sequence, 154 residues long: UPF0225 protein Asuc_0343 (154 aa).

The protein belongs to the UPF0225 family.

This Actinobacillus succinogenes (strain ATCC 55618 / DSM 22257 / CCUG 43843 / 130Z) protein is UPF0225 protein Asuc_0343.